Here is a 398-residue protein sequence, read N- to C-terminus: Subtilisin-like protease CPC735_050320 (398 aa).

The first 19 residues, 1-19, serve as a signal peptide directing secretion; it reads MVFLGKILPLALAALSVNG. Residues 20–117 constitute a propeptide that is removed on maturation; the sequence is AEILSAPGAE…IERDQIMKAS (98 aa). Residues 35–115 form the Inhibitor I9 domain; the sequence is YIVVMKEGTS…AYIERDQIMK (81 aa). Residues 127–398 form the Peptidase S8 domain; that stretch reads SWGLARVSSR…NRLINNGVSQ (272 aa). Residues Asp159 and His190 each act as charge relay system in the active site. Asn220 and Asn250 each carry an N-linked (GlcNAc...) asparagine glycan. Residue Ser344 is the Charge relay system of the active site.

It belongs to the peptidase S8 family.

It is found in the secreted. Secreted subtilisin-like serine protease with keratinolytic activity that contributes to pathogenicity. The chain is Subtilisin-like protease CPC735_050320 from Coccidioides posadasii (strain C735) (Valley fever fungus).